A 454-amino-acid chain; its full sequence is Golgi reassembly-stacking protein 2 (454 aa).

Gly2 is lipidated: N-myristoyl glycine. PDZ GRASP-type domains are found at residues 15-105 (EGYH…FCSF) and 111-199 (NVWH…YGYL). A GRASP region spans residues 15-215 (EGYHVLRVQE…PFEEGKKISL (201 aa)). A dimethylated arginine mark is found at Arg30 and Arg47. The important for membrane binding stretch occupies residues 194-199 (IGYGYL). Ser214 is modified (phosphoserine). Thr222 is subject to Phosphothreonine. Thr225 is subject to Phosphothreonine; by MAPK. The segment at 377 to 454 (EGSSAASAGE…VTDANASGAS (78 aa)) is disordered. Ser411 bears the Phosphoserine mark. The residue at position 435 (Thr435) is a Phosphothreonine. Residues Ser443 and Ser451 each carry the phosphoserine modification.

This sequence belongs to the GORASP family. Homodimer. Homooligomer. ER stress induces phosphorylation-dependent monomerization. Interacts with BLZF1/Golgin 45. Identified in a complex with RAB2 and GORASP2. Interacts with JAM2 and JAM3. Interacts with members of the p24 cargo receptors. Interacts with CNIH1 and the cytoplasmic domain of transmembrane TGFA, prior its transit in the trans-Golgi. Interacts with KCTD5. Interacts with TMED2 and TMED3. Interacts with SEC16A in response to ER stress. Interacts (via PDZ GRASP-type 1 domain) with core-glycosylated CFTR in response to ER stress. Myristoylated. Myristoylation is essential for the Golgi targeting. Post-translationally, palmitoylated. In terms of processing, phosphorylated in mitotic cells. ER stress-induced phosphorylation at Ser-443 induces monomerization and subsequent relocalization from Golgi to ER which is essential for mediating unconventional (ER/Golgi-independent) trafficking of CFTR to the cell membrane. As to expression, detected in lung, brain, heart, liver and testis.

Its subcellular location is the golgi apparatus membrane. The protein localises to the endoplasmic reticulum membrane. It localises to the golgi apparatus. Functionally, key structural protein of the Golgi apparatus. The membrane cisternae of the Golgi apparatus adhere to each other to form stacks, which are aligned side by side to form the Golgi ribbon. Acting in concert with GORASP1/GRASP65, is required for the formation and maintenance of the Golgi ribbon, and may be dispensable for the formation of stacks. However, other studies suggest that GORASP2 plays a role in the assembly and membrane stacking of the Golgi cisternae, and in the process by which Golgi stacks reform after breakdown during mitosis and meiosis. May regulate the intracellular transport and presentation of a defined set of transmembrane proteins, such as transmembrane TGFA. Required for normal acrosome formation during spermiogenesis and normal male fertility, probably by promoting colocalization of JAM2 and JAM3 at contact sites between germ cells and Sertoli cells. Mediates ER stress-induced unconventional (ER/Golgi-independent) trafficking of core-glycosylated CFTR to cell membrane. In Rattus norvegicus (Rat), this protein is Golgi reassembly-stacking protein 2 (Gorasp2).